Consider the following 448-residue polypeptide: Trigger factor (448 aa).

One can recognise a PPIase FKBP-type domain in the interval 167 to 253 (GSIVRVDFVE…LKDIKRRDIP (87 aa)).

The protein belongs to the FKBP-type PPIase family. Tig subfamily.

Its subcellular location is the cytoplasm. It catalyses the reaction [protein]-peptidylproline (omega=180) = [protein]-peptidylproline (omega=0). Involved in protein export. Acts as a chaperone by maintaining the newly synthesized protein in an open conformation. Functions as a peptidyl-prolyl cis-trans isomerase. This Borrelia turicatae (strain 91E135) protein is Trigger factor.